We begin with the raw amino-acid sequence, 1436 residues long: Probable deoxyribonuclease RhsB (1436 aa).

The disordered stretch occupies residues 16 to 42 (HAGNRPNPPADRPQPCQGKPPTSPGKT). 2 helical membrane-spanning segments follow: residues 48-68 (FLGA…VAAA) and 70-90 (VFLV…LAVF). YD repeat units follow at residues 486–521 (YNTA…CADG), 569–605 (YDEV…DGSG), 612–647 (YDDA…GPDA), 766–799 (DLLT…PDGS), and 847–879 (YDAR…VSSA).

It belongs to the RHS/WapA nuclease family.

The protein resides in the membrane. Its function is as follows. Toxic component of a toxin-immunity protein module, which functions as a cellular contact-dependent growth inhibition (CDI) system. This protein may be a nuclease that is specifically inhibited by its cognate immunity protein RhsBI. Upon expression of the C-terminus (residues 1284-1436) in E.coli growth is inhibited, cells elongate, nucleoids condense and plasmid DNA is degraded; these effects are blocked specifically by cognate immunity protein RshIB. Cell contact is necessary for growth inhibition. This is Probable deoxyribonuclease RhsB (rhsB) from Dickeya dadantii (strain 3937) (Erwinia chrysanthemi (strain 3937)).